The chain runs to 88 residues: MSSIHVASMILLLFLFLHHSDSRHLDNVHITASRFSLVKDQNVVSSSTSKEPVKVSRFVPGPLKHHHRRPPLLFADYPKPSTRPPRHN.

Residues 1–22 (MSSIHVASMILLLFLFLHHSDS) form the signal peptide. Positions 23 to 75 (RHLDNVHITASRFSLVKDQNVVSSSTSKEPVKVSRFVPGPLKHHHRRPPLLFA) are excised as a propeptide. The disordered stretch occupies residues 44–88 (VSSSTSKEPVKVSRFVPGPLKHHHRRPPLLFADYPKPSTRPPRHN). Sulfotyrosine is present on Tyr77. Pro85 carries the post-translational modification Hydroxyproline.

It belongs to the RGF family. In terms of assembly, binds to LRR receptor-like serine/threonine-protein kinases RGI1, RGI2 and RGI3 to trigger their dimerization with SERK proteins and subsequent signaling. Expressed in roots, shoots, leaves and flowers.

It localises to the secreted. The protein resides in the endoplasmic reticulum. Signaling peptide (root growth factor) that maintains the postembryonic root stem cell niche. Regulates the pattern of root growth and lateral root development by modulating the length and the number of cortical cells in the root apical meristem (RAM), and the anticlinal asymmetric cell divisions in lateral root initiation cells. This chain is Protein GOLVEN 10, found in Arabidopsis thaliana (Mouse-ear cress).